We begin with the raw amino-acid sequence, 808 residues long: Phenylalanine--tRNA ligase beta subunit (808 aa).

Residues 40–149 (RPELDFVKIV…DQAEVGKTIR (110 aa)) enclose the tRNA-binding domain. In terms of domain architecture, B5 spans 407–484 (HKEVRIHTDI…RTKGYDTIQV (78 aa)). Residues Asp462, Asp468, Glu471, and Glu472 each contribute to the Mg(2+) site. Residues 716–808 (SQFPEAEIDL…LAGKNGFVLR (93 aa)) form the FDX-ACB domain.

Belongs to the phenylalanyl-tRNA synthetase beta subunit family. Type 1 subfamily. In terms of assembly, tetramer of two alpha and two beta subunits. The cofactor is Mg(2+).

The protein localises to the cytoplasm. The catalysed reaction is tRNA(Phe) + L-phenylalanine + ATP = L-phenylalanyl-tRNA(Phe) + AMP + diphosphate + H(+). The sequence is that of Phenylalanine--tRNA ligase beta subunit from Leptospira interrogans serogroup Icterohaemorrhagiae serovar copenhageni (strain Fiocruz L1-130).